Reading from the N-terminus, the 396-residue chain is Cysteine protease ATG4A (396 aa).

The active-site Nucleophile is the Cys-77. Catalysis depends on residues Asp-276 and His-278. Residues 390-393 carry the LIR motif; that stretch reads FEIL.

This sequence belongs to the peptidase C54 family. In terms of assembly, interacts with ATG9A; the interaction is direct.

The protein localises to the cytoplasm. It catalyses the reaction [protein]-C-terminal L-amino acid-glycyl-phosphatidylethanolamide + H2O = [protein]-C-terminal L-amino acid-glycine + a 1,2-diacyl-sn-glycero-3-phosphoethanolamine. Inhibited by N-ethylmaleimide. Redox-regulated during autophagy since reducing conditions activate ATG4A whereas an oxidizing environment such as the presence of H(2)O(2) inhibits its activity. Cysteine protease that plays a key role in autophagy by mediating both proteolytic activation and delipidation of ATG8 family proteins. The protease activity is required for proteolytic activation of ATG8 family proteins: cleaves the C-terminal amino acid of ATG8 proteins to reveal a C-terminal glycine. Exposure of the glycine at the C-terminus is essential for ATG8 proteins conjugation to phosphatidylethanolamine (PE) and insertion to membranes, which is necessary for autophagy. Preferred substrate is GABARAPL2 followed by MAP1LC3A and GABARAP. Protease activity is also required to counteract formation of high-molecular weight conjugates of ATG8 proteins (ATG8ylation): acts as a deubiquitinating-like enzyme that removes ATG8 conjugated to other proteins, such as ATG3. In addition to the protease activity, also mediates delipidation of ATG8 family proteins. Catalyzes delipidation of PE-conjugated forms of ATG8 proteins during macroautophagy. Compared to ATG4B, the major protein for proteolytic activation of ATG8 proteins, shows weaker ability to cleave the C-terminal amino acid of ATG8 proteins, while it displays stronger delipidation activity. Involved in phagophore growth during mitophagy independently of its protease activity and of ATG8 proteins: acts by regulating ATG9A trafficking to mitochondria and promoting phagophore-endoplasmic reticulum contacts during the lipid transfer phase of mitophagy. In Mus musculus (Mouse), this protein is Cysteine protease ATG4A.